The following is a 326-amino-acid chain: Peroxidase 46 (326 aa).

Positions 1–27 (MASSYRINCSTLLHLLMFLSSLLTSSA) are cleaved as a signal peptide. N-linked (GlcNAc...) asparagine glycosylation is present at asparagine 28. 4 disulfides stabilise this stretch: cysteine 38–cysteine 114, cysteine 71–cysteine 76, cysteine 120–cysteine 322, and cysteine 199–cysteine 233. The active-site Proton acceptor is the histidine 69. 5 residues coordinate Ca(2+): aspartate 70, valine 73, glycine 75, aspartate 77, and serine 79. N-linked (GlcNAc...) asparagine glycosylation is present at asparagine 85. Position 192 (histidine 192) interacts with heme b. Ca(2+) is bound at residue threonine 193. Aspartate 246, threonine 249, and aspartate 254 together coordinate Ca(2+). The N-linked (GlcNAc...) asparagine glycan is linked to asparagine 278.

This sequence belongs to the peroxidase family. Classical plant (class III) peroxidase subfamily. The cofactor is heme b. Ca(2+) is required as a cofactor.

It is found in the secreted. It catalyses the reaction 2 a phenolic donor + H2O2 = 2 a phenolic radical donor + 2 H2O. Functionally, removal of H(2)O(2), oxidation of toxic reductants, biosynthesis and degradation of lignin, suberization, auxin catabolism, response to environmental stresses such as wounding, pathogen attack and oxidative stress. These functions might be dependent on each isozyme/isoform in each plant tissue. The chain is Peroxidase 46 (PER46) from Arabidopsis thaliana (Mouse-ear cress).